A 198-amino-acid polypeptide reads, in one-letter code: Ribonuclease HII (198 aa).

In terms of domain architecture, RNase H type-2 spans glycine 14–leucine 198. 3 residues coordinate a divalent metal cation: aspartate 20, glutamate 21, and aspartate 112.

This sequence belongs to the RNase HII family. Requires Mn(2+) as cofactor. Mg(2+) serves as cofactor.

Its subcellular location is the cytoplasm. The catalysed reaction is Endonucleolytic cleavage to 5'-phosphomonoester.. In terms of biological role, endonuclease that specifically degrades the RNA of RNA-DNA hybrids. In Wolbachia pipientis wMel, this protein is Ribonuclease HII.